The chain runs to 453 residues: Ribosomal protein uS12 methylthiotransferase RimO (453 aa).

The region spanning 5–120 (PKVGFVSLGC…VMQAVHSHLP (116 aa)) is the MTTase N-terminal domain. [4Fe-4S] cluster-binding residues include Cys14, Cys50, Cys79, Cys151, Cys155, and Cys158. The Radical SAM core domain occupies 137–382 (LTPRHYAYLK…MEVAEEVSAQ (246 aa)). A TRAM domain is found at 385–453 (QRKVGKTLKV…ADGHDLWGEV (69 aa)).

Belongs to the methylthiotransferase family. RimO subfamily. Requires [4Fe-4S] cluster as cofactor.

The protein resides in the cytoplasm. The catalysed reaction is L-aspartate(89)-[ribosomal protein uS12]-hydrogen + (sulfur carrier)-SH + AH2 + 2 S-adenosyl-L-methionine = 3-methylsulfanyl-L-aspartate(89)-[ribosomal protein uS12]-hydrogen + (sulfur carrier)-H + 5'-deoxyadenosine + L-methionine + A + S-adenosyl-L-homocysteine + 2 H(+). Its function is as follows. Catalyzes the methylthiolation of an aspartic acid residue of ribosomal protein uS12. The polypeptide is Ribosomal protein uS12 methylthiotransferase RimO (Burkholderia ambifaria (strain ATCC BAA-244 / DSM 16087 / CCUG 44356 / LMG 19182 / AMMD) (Burkholderia cepacia (strain AMMD))).